A 403-amino-acid polypeptide reads, in one-letter code: Acetyl-CoA acetyltransferase IA (403 aa).

Cys-91 serves as the catalytic Acyl-thioester intermediate. Catalysis depends on proton acceptor residues His-353 and Cys-383. The Microbody targeting signal motif lies at 401-403; the sequence is AKL.

The protein belongs to the thiolase-like superfamily. Thiolase family. In terms of assembly, multimeric.

The protein localises to the peroxisome. The enzyme catalyses 2 acetyl-CoA = acetoacetyl-CoA + CoA. Its pathway is metabolic intermediate biosynthesis; (R)-mevalonate biosynthesis; (R)-mevalonate from acetyl-CoA: step 1/3. The sequence is that of Acetyl-CoA acetyltransferase IA (PACTA) from Candida tropicalis (Yeast).